The primary structure comprises 147 residues: Sentan (147 aa).

The disordered stretch occupies residues 1–36; the sequence is MGGCMHSTWDHALHSRGEPRPSEAPASISAPSKMPK. A compositionally biased stretch (basic and acidic residues) spans 8–21; sequence TWDHALHSRGEPRP. The span at 23–32 shows a compositional bias: low complexity; that stretch reads EAPASISAPS.

It belongs to the S-100 family. Expressed exclusively in ciliated epithelial cells. Detected in ciliated epithelium of trachea and oviduct (at protein level).

It is found in the cell projection. The protein resides in the cilium. Functionally, may be a component of the linker structure that bridges the ciliary membrane and peripheral singlet microtubules. In Mus musculus (Mouse), this protein is Sentan (Sntn).